A 54-amino-acid polypeptide reads, in one-letter code: Large ribosomal subunit protein bL33 (54 aa).

The protein belongs to the bacterial ribosomal protein bL33 family.

This is Large ribosomal subunit protein bL33 from Chloroflexus aurantiacus (strain ATCC 29366 / DSM 635 / J-10-fl).